The following is a 28-amino-acid chain: Apolipoprotein C-I (28 aa).

Belongs to the apolipoprotein C1 family.

It localises to the secreted. Inhibitor of lipoprotein binding to the low density lipoprotein (LDL) receptor, LDL receptor-related protein, and very low density lipoprotein (VLDL) receptor. Associates with high density lipoproteins (HDL) and the triacylglycerol-rich lipoproteins in the plasma and makes up about 10% of the protein of the VLDL and 2% of that of HDL. Appears to interfere directly with fatty acid uptake and is also the major plasma inhibitor of cholesteryl ester transfer protein (CETP). Binds free fatty acids and reduces their intracellular esterification. Modulates the interaction of APOE with beta-migrating VLDL and inhibits binding of beta-VLDL to the LDL receptor-related protein. This Oryctolagus cuniculus (Rabbit) protein is Apolipoprotein C-I (APOC1).